A 156-amino-acid chain; its full sequence is ATP synthase subunit b (156 aa).

A helical transmembrane segment spans residues 11–31 (AIAFVLFVLFCMKYIWPPIMA).

Belongs to the ATPase B chain family. In terms of assembly, F-type ATPases have 2 components, F(1) - the catalytic core - and F(0) - the membrane proton channel. F(1) has five subunits: alpha(3), beta(3), gamma(1), delta(1), epsilon(1). F(0) has three main subunits: a(1), b(2) and c(10-14). The alpha and beta chains form an alternating ring which encloses part of the gamma chain. F(1) is attached to F(0) by a central stalk formed by the gamma and epsilon chains, while a peripheral stalk is formed by the delta and b chains.

It is found in the cell inner membrane. In terms of biological role, f(1)F(0) ATP synthase produces ATP from ADP in the presence of a proton or sodium gradient. F-type ATPases consist of two structural domains, F(1) containing the extramembraneous catalytic core and F(0) containing the membrane proton channel, linked together by a central stalk and a peripheral stalk. During catalysis, ATP synthesis in the catalytic domain of F(1) is coupled via a rotary mechanism of the central stalk subunits to proton translocation. Its function is as follows. Component of the F(0) channel, it forms part of the peripheral stalk, linking F(1) to F(0). This chain is ATP synthase subunit b, found in Yersinia enterocolitica serotype O:8 / biotype 1B (strain NCTC 13174 / 8081).